The primary structure comprises 77 residues: uncharacterized protein (77 aa).

4Fe-4S ferredoxin-type domains lie at 3–32 (VEII…WTKD) and 36–65 (KYYA…IKVV). C12, C15, C18, C22, C45, C48, C51, and C55 together coordinate [4Fe-4S] cluster.

[4Fe-4S] cluster is required as a cofactor.

Ferredoxins are iron-sulfur proteins that transfer electrons probably in the CO-dehydrogenase complex. This is an uncharacterized protein from Methanocaldococcus jannaschii (strain ATCC 43067 / DSM 2661 / JAL-1 / JCM 10045 / NBRC 100440) (Methanococcus jannaschii).